Here is a 524-residue protein sequence, read N- to C-terminus: Peptide chain release factor 3 (524 aa).

Residues 8–276 (NKRRTFAIIS…GFAKYAPAPE (269 aa)) enclose the tr-type G domain. GTP contacts are provided by residues 17–24 (SHPDAGKT), 85–89 (DTPGH), and 139–142 (NKLD).

Belongs to the TRAFAC class translation factor GTPase superfamily. Classic translation factor GTPase family. PrfC subfamily.

It is found in the cytoplasm. Its function is as follows. Increases the formation of ribosomal termination complexes and stimulates activities of RF-1 and RF-2. It binds guanine nucleotides and has strong preference for UGA stop codons. It may interact directly with the ribosome. The stimulation of RF-1 and RF-2 is significantly reduced by GTP and GDP, but not by GMP. The polypeptide is Peptide chain release factor 3 (Hydrogenovibrio crunogenus (strain DSM 25203 / XCL-2) (Thiomicrospira crunogena)).